A 270-amino-acid chain; its full sequence is UPF0354 protein Bcer98_3354 (270 aa).

Belongs to the UPF0354 family.

The sequence is that of UPF0354 protein Bcer98_3354 from Bacillus cytotoxicus (strain DSM 22905 / CIP 110041 / 391-98 / NVH 391-98).